We begin with the raw amino-acid sequence, 313 residues long: tRNA dimethylallyltransferase (313 aa).

9–16 is a binding site for ATP; it reads GPTASGKT. Residue 11–16 coordinates substrate; sequence TASGKT. The interaction with substrate tRNA stretch occupies residues 34 to 37; that stretch reads DSMQ.

The protein belongs to the IPP transferase family. As to quaternary structure, monomer. Mg(2+) is required as a cofactor.

The enzyme catalyses adenosine(37) in tRNA + dimethylallyl diphosphate = N(6)-dimethylallyladenosine(37) in tRNA + diphosphate. Functionally, catalyzes the transfer of a dimethylallyl group onto the adenine at position 37 in tRNAs that read codons beginning with uridine, leading to the formation of N6-(dimethylallyl)adenosine (i(6)A). This chain is tRNA dimethylallyltransferase, found in Acetivibrio thermocellus (strain ATCC 27405 / DSM 1237 / JCM 9322 / NBRC 103400 / NCIMB 10682 / NRRL B-4536 / VPI 7372) (Clostridium thermocellum).